Reading from the N-terminus, the 115-residue chain is Superoxide reductase (115 aa).

Fe cation contacts are provided by Glu-14, His-16, His-41, His-47, Cys-102, and His-105.

This sequence belongs to the desulfoferrodoxin family. Homotetramer. Requires Fe cation as cofactor.

The enzyme catalyses reduced [rubredoxin] + superoxide + 2 H(+) = oxidized [rubredoxin] + H2O2. Functionally, uses electrons from reduced NADP, by way of rubredoxin and an oxidoreductase, to catalyze the reduction of superoxide to hydrogen peroxide. This chain is Superoxide reductase (sorA), found in Pyrococcus abyssi (strain GE5 / Orsay).